Consider the following 922-residue polypeptide: Ubiquitin carboxyl-terminal hydrolase 29 (922 aa).

The interval Gly-160–Lys-196 is disordered. A compositionally biased stretch (polar residues) spans Gln-170–Glu-181. The USP domain occupies Gln-285–Asn-885. Cys-294 acts as the Nucleophile in catalysis. His-840 functions as the Proton acceptor in the catalytic mechanism.

It belongs to the peptidase C19 family.

The protein resides in the cytoplasm. It is found in the perinuclear region. The enzyme catalyses Thiol-dependent hydrolysis of ester, thioester, amide, peptide and isopeptide bonds formed by the C-terminal Gly of ubiquitin (a 76-residue protein attached to proteins as an intracellular targeting signal).. In terms of biological role, deubiquitinase involved in innate antiviral immunity by mediating 'Lys-48'-linked deubiquitination of CGAS, thereby promoting its stabilization. In Homo sapiens (Human), this protein is Ubiquitin carboxyl-terminal hydrolase 29.